We begin with the raw amino-acid sequence, 1507 residues long: Protein TIC 214 (1507 aa).

Helical transmembrane passes span 4-24 (IYLV…LPIG), 53-73 (TILL…VLAL), 81-101 (LWVK…IYLY), 129-149 (AFLE…NPVF), 163-183 (ISTF…IFFL), and 202-222 (LVKI…SFLC).

The protein belongs to the TIC214 family. Part of the Tic complex.

Its subcellular location is the plastid. The protein localises to the chloroplast inner membrane. Its function is as follows. Involved in protein precursor import into chloroplasts. May be part of an intermediate translocation complex acting as a protein-conducting channel at the inner envelope. The protein is Protein TIC 214 of Staurastrum punctulatum (Green alga).